The chain runs to 366 residues: Putative F-box protein At3g13624 (366 aa).

An F-box domain is found at 1–51 (MTTISDLPEDVVEEILPRVPLTSLSAVRSICKTWNTLSKNRVLCKAAVKKQ).

The protein is Putative F-box protein At3g13624 of Arabidopsis thaliana (Mouse-ear cress).